The primary structure comprises 150 residues: Con-Ins Im1 (150 aa).

A signal peptide spans 1-25 (MATSLLSPLLVAMLGFLLHVHVARA). 4 cysteine pairs are disulfide-bonded: cysteine 31-cysteine 133, cysteine 46-cysteine 136, cysteine 58-cysteine 149, and cysteine 135-cysteine 140. Residues 64–111 (GYAGGQRQLRKRTSMIDSDDMEAEGGSRGGFLMSKRRALSYLQKETNP) constitute a propeptide, c peptide. Glutamate 144 carries the 4-carboxyglutamate; partial modification.

The protein belongs to the insulin family. In terms of assembly, heterodimer of A and B chains; disulfide-linked. Expressed by the venom gland.

It is found in the secreted. Its function is as follows. This venom insulin facilitates prey capture by rapidly inducing hypoglycemic shock. Intraperitoneal injection of this peptide into zebrafish lowers blood glucose with the same potency than human insulin. In vivo, when applied to water, this peptide reduces overall locomotor activity of zebrafish larvae, observed as a significant decrease in the percentage of time spent swimming and movement frequency. The protein is Con-Ins Im1 of Conus imperialis (Imperial cone).